Here is a 262-residue protein sequence, read N- to C-terminus: Phycoerythrobilin:ferredoxin oxidoreductase (262 aa).

The protein belongs to the HY2 family.

It catalyses the reaction (3Z)-phycoerythrobilin + oxidized 2[4Fe-4S]-[ferredoxin] = 15,16-dihydrobiliverdin + reduced 2[4Fe-4S]-[ferredoxin] + 2 H(+). Its function is as follows. Catalyzes the two-electron reduction of the C2 and C3(1) diene system of 15,16-dihydrobiliverdin. This Parasynechococcus marenigrum (strain WH8102) protein is Phycoerythrobilin:ferredoxin oxidoreductase (pebB).